Here is a 134-residue protein sequence, read N- to C-terminus: Large ribosomal subunit protein uL16c (134 aa).

Belongs to the universal ribosomal protein uL16 family. In terms of assembly, part of the 50S ribosomal subunit.

The protein resides in the plastid. Its subcellular location is the chloroplast. In Guillardia theta (Cryptophyte), this protein is Large ribosomal subunit protein uL16c.